Here is a 376-residue protein sequence, read N- to C-terminus: Putative transmembrane protein 183BP (376 aa).

Disordered regions lie at residues 1–20 (MARG…AMPK) and 102–127 (AQEE…ELDG). The helical transmembrane segment at 300 to 320 (LNFIFIPIVMGMIFTLFTINV) threads the bilayer.

This sequence belongs to the TMEM183 family. As to expression, expressed in brain, lung, pancreas, thymus, intestine and blood. Not detected in heart, placenta, liver, muscle, kidney, spleen, prostate, testis, ovary and colon.

It is found in the membrane. The chain is Putative transmembrane protein 183BP from Homo sapiens (Human).